Here is a 74-residue protein sequence, read N- to C-terminus: Metallothionein-like protein type 2 (74 aa).

It belongs to the metallothionein superfamily. Type 15 family.

Its function is as follows. Metallothioneins have a high content of cysteine residues that bind various heavy metals. The polypeptide is Metallothionein-like protein type 2 (Nicotiana plumbaginifolia (Leadwort-leaved tobacco)).